The sequence spans 436 residues: Proline transporter 3 (436 aa).

The next 11 helical transmembrane spans lie at 29–49 (SWFQ…VLGY), 52–72 (TVMV…ATAI), 118–138 (LFMI…AVYV), 151–171 (FIAI…HLSA), 172–192 (LGIW…VAIV), 216–236 (LFTI…GMLP), 254–274 (LYFQ…IGYW), 296–316 (ALAN…FASP), 345–365 (GGYI…GDFM), 366–386 (SLTG…HMYY), and 405–425 (VVFF…LIAL).

Belongs to the amino acid/polyamine transporter 2 family. Amino acid/auxin permease (AAAP) (TC 2.A.18.3) subfamily. As to expression, expressed in epidermal cells of leaves, sepals and petals.

It localises to the cell membrane. Proline transporter that mediates proline and glycine betaine transport. When expressed in a heterologous system (yeast), imports L-proline, glycine betaine and GABA across the plasma membrane. The sequence is that of Proline transporter 3 (PROT3) from Arabidopsis thaliana (Mouse-ear cress).